Here is a 130-residue protein sequence, read N- to C-terminus: Anti-adapter protein IraD (130 aa).

It belongs to the GpW/Gp25 family. IraD subfamily. In terms of assembly, interacts with RssB.

The protein localises to the cytoplasm. Inhibits RpoS proteolysis by regulating RssB activity, thereby increasing the stability of the sigma stress factor RpoS during oxidative stress. Its effect on RpoS stability is due to its interaction with RssB, which probably blocks the interaction of RssB with RpoS, and the consequent delivery of the RssB-RpoS complex to the ClpXP protein degradation pathway. The protein is Anti-adapter protein IraD of Escherichia coli O139:H28 (strain E24377A / ETEC).